A 141-amino-acid chain; its full sequence is Large ribosomal subunit protein uL11 (141 aa).

It belongs to the universal ribosomal protein uL11 family. Part of the ribosomal stalk of the 50S ribosomal subunit. Interacts with L10 and the large rRNA to form the base of the stalk. L10 forms an elongated spine to which L12 dimers bind in a sequential fashion forming a multimeric L10(L12)X complex. One or more lysine residues are methylated.

In terms of biological role, forms part of the ribosomal stalk which helps the ribosome interact with GTP-bound translation factors. The polypeptide is Large ribosomal subunit protein uL11 (Geobacillus sp. (strain WCH70)).